The sequence spans 377 residues: Anhydro-N-acetylmuramic acid kinase (377 aa).

Residue Gly18–Asp25 participates in ATP binding.

It belongs to the anhydro-N-acetylmuramic acid kinase family.

It catalyses the reaction 1,6-anhydro-N-acetyl-beta-muramate + ATP + H2O = N-acetyl-D-muramate 6-phosphate + ADP + H(+). It participates in amino-sugar metabolism; 1,6-anhydro-N-acetylmuramate degradation. It functions in the pathway cell wall biogenesis; peptidoglycan recycling. Catalyzes the specific phosphorylation of 1,6-anhydro-N-acetylmuramic acid (anhMurNAc) with the simultaneous cleavage of the 1,6-anhydro ring, generating MurNAc-6-P. Is required for the utilization of anhMurNAc either imported from the medium or derived from its own cell wall murein, and thus plays a role in cell wall recycling. This Xanthomonas oryzae pv. oryzae (strain MAFF 311018) protein is Anhydro-N-acetylmuramic acid kinase.